We begin with the raw amino-acid sequence, 164 residues long: Cold-inducible RNA-binding protein (164 aa).

Positions 6-84 (GKLFVGGLSF…RQIRVDQAGK (79 aa)) constitute an RRM domain. The tract at residues 65 to 164 (AGMNGKTVDG…SYRDSYDSYG (100 aa)) is disordered. The span at 93–118 (YRGGSSGGGRGFFRGGRGRGGGGYGG) shows a compositional bias: gly residues. Residues 155 to 164 (SYRDSYDSYG) show a composition bias toward basic and acidic residues.

Interacts with prmt1. Interacts with elavl1/elrA (via RRM3). Associates with ribosomes. In terms of processing, methylated on arginine residues within RGG motifs. Methylation by prmt1 promotes cytoplasmic accumulation.

The protein localises to the nucleus. It localises to the nucleoplasm. The protein resides in the cytoplasm. Cold-inducible mRNA binding protein. Acts cooperatively with elavl1/elrA to stabilize AU-rich element (ARE)-containing mRNAs by binding to them and inhibiting their deadenylation. Essential for embryonic gastrulation and neural development, acting to maintain the expression of a set of adhesion molecules, and cell movement during embryogenesis. Required for pronephros development. May play a role in hibernation. This Aquarana catesbeiana (American bullfrog) protein is Cold-inducible RNA-binding protein.